A 103-amino-acid chain; its full sequence is MAANPSGQGFQNKNRVAILAELQEKRKLLMQNQSSTNHPGASIALARSPLNKDFRDHAEQQHIAAQQKAALQHAHAHSSGYFITQDSAFGNLILPVLPRLEAE.

This sequence belongs to the SOSS-C family. Belongs to the multiprotein complex Integrator. Component of the SOSS complex, composed of SOSS-B (SOSS-B1/NABP2 or SOSS-B2/NABP1), SOSS-A/INTS3 and SOSS-C/INIP.

Its subcellular location is the nucleus. Functionally, component of the SOSS complex, a multiprotein complex that functions downstream of the MRN complex to promote DNA repair and G2/M checkpoint. The SOSS complex associates with single-stranded DNA at DNA lesions and influences diverse endpoints in the cellular DNA damage response including cell-cycle checkpoint activation, recombinational repair and maintenance of genomic stability. Required for efficient homologous recombination-dependent repair of double-strand breaks (DSBs). The sequence is that of SOSS complex subunit C (INIP) from Gallus gallus (Chicken).